Here is a 203-residue protein sequence, read N- to C-terminus: Ras-related protein Rab-7L1 (203 aa).

GTP-binding residues include Ser33, Lys34, His35, Tyr36, Lys37, and Thr39. Residues 36–44 carry the Effector region motif; it reads YKSTVGVDF. Thr71 is modified (phosphothreonine; by LRRK2). Ser72 is modified (phosphoserine; by LRRK2). GTP is bound by residues Lys126, Val156, and Lys157. S-geranylgeranyl cysteine attachment occurs at residues Cys202 and Cys203.

It belongs to the small GTPase superfamily. Rab family. Interacts with LRRK2 (via the N-terminus); this interaction is direct and stimulates kinase activity. In case of Salmonella enterica serovar Typhimurium (S.typhimurium) infection, is proteolytically cleaved between Gly-41 and Val-42 by the GtgE viral protease encoded on the Gifsy-2 lysogen bacteriophage, which therefore prevents the recruitment of RAB29 to S.typhimurium-containing vacuoles. In contrast, no proteolytically cleavage is detected in S.typhi-infected cells. In terms of tissue distribution, ubiquitous.

The protein resides in the cell membrane. Its subcellular location is the cytoplasm. It is found in the perinuclear region. The protein localises to the golgi apparatus. It localises to the golgi apparatus membrane. The protein resides in the trans-Golgi network. Its subcellular location is the vacuole. It is found in the cytoskeleton. Functionally, the small GTPases Rab are key regulators in vesicle trafficking. Essential for maintaining the integrity of the endosome-trans-Golgi network structure. Together with LRRK2, plays a role in the retrograde trafficking pathway for recycling proteins, such as mannose 6 phosphate receptor (M6PR), between lysosomes and the Golgi apparatus in a retromer-dependent manner. Recruits LRRK2 to the Golgi complex and stimulates LRRK2 kinase activity. Stimulates phosphorylation of RAB10 'Thr-73' by LRRK2. Regulates neuronal process morphology in the intact central nervous system (CNS). May play a role in the formation of typhoid toxin transport intermediates during Salmonella enterica serovar Typhi (S.typhi) epithelial cell infection. The sequence is that of Ras-related protein Rab-7L1 (RAB29) from Homo sapiens (Human).